The chain runs to 289 residues: Homeobox protein engrailed-2 (289 aa).

Composition is skewed to basic and acidic residues over residues 1–12 (MEEGGRSPREEA) and 60–83 (EFGR…ESRR). 2 disordered regions span residues 1 to 166 (MEEG…GNQP) and 179 to 206 (SDRP…PRTA). Residues 96-114 (VPGGGGGGGGGSPGRGEGG) are compositionally biased toward gly residues. Over residues 142 to 160 (LSGAELSVSSDSDSSQAGS) the composition is skewed to low complexity. The segment at residues 200–259 (DKRPRTAFTAEQLQRLKAEFQTNRYLTEQRRQSLAQELGLNESQIKIWFQNKRAKIKKAT) is a DNA-binding region (homeobox).

The protein belongs to the engrailed homeobox family.

It localises to the nucleus. This chain is Homeobox protein engrailed-2 (EN2), found in Gallus gallus (Chicken).